Reading from the N-terminus, the 833-residue chain is Mannosyl-oligosaccharide glucosidase (833 aa).

Over Met-1 to Lys-10 the chain is Cytoplasmic. A helical; Signal-anchor for type II membrane protein membrane pass occupies residues Thr-11–Ile-28. Residues Ser-29–Phe-833 lie on the Lumenal side of the membrane. 2 residues coordinate substrate: Asn-42 and Asn-122. Asn-42, Asn-122, and Asn-135 each carry an N-linked (GlcNAc...) asparagine glycan. Substrate is bound at residue Glu-143. Asp-601 acts as the Proton donor in catalysis. Cys-669 and Cys-685 are joined by a disulfide. Asn-787 carries an N-linked (GlcNAc...) asparagine glycan. Catalysis depends on Glu-804, which acts as the Proton acceptor.

The protein belongs to the glycosyl hydrolase 63 family. N-glycosylated.

Its subcellular location is the endoplasmic reticulum membrane. The enzyme catalyses N(4)-(alpha-D-Glc-(1-&gt;2)-alpha-D-Glc-(1-&gt;3)-alpha-D-Glc-(1-&gt;3)-alpha-D-Man-(1-&gt;2)-alpha-D-Man-(1-&gt;2)-alpha-D-Man-(1-&gt;3)-[alpha-D-Man-(1-&gt;2)-alpha-D-Man-(1-&gt;3)-[alpha-D-Man-(1-&gt;2)-alpha-D-Man-(1-&gt;6)]-alpha-D-Man-(1-&gt;6)]-beta-D-Man-(1-&gt;4)-beta-D-GlcNAc-(1-&gt;4)-beta-D-GlcNAc)-L-asparaginyl-[protein] + H2O = N(4)-(alpha-D-Glc-(1-&gt;3)-alpha-D-Glc-(1-&gt;3)-alpha-D-Man-(1-&gt;2)-alpha-D-Man-(1-&gt;2)-alpha-D-Man-(1-&gt;3)-[alpha-D-Man-(1-&gt;2)-alpha-D-Man-(1-&gt;3)-[alpha-D-Man-(1-&gt;2)-alpha-D-Man-(1-&gt;6)]-alpha-D-Man-(1-&gt;6)]-beta-D-Man-(1-&gt;4)-beta-D-GlcNAc-(1-&gt;4)-beta-D-GlcNAc)-L-asparaginyl-[protein] + beta-D-glucose. Its pathway is glycan metabolism; N-glycan degradation. With respect to regulation, miglitol is an effective inhibitor at 1 mM. Its function is as follows. Cleaves the distal alpha 1,2-linked glucose residue from the Glc(3)Man(9)GlcNAc(2) oligosaccharide precursor highly specifically. Seems to play a role in beta-1,6-glucan synthesis. In Saccharomyces cerevisiae (strain ATCC 204508 / S288c) (Baker's yeast), this protein is Mannosyl-oligosaccharide glucosidase (CWH41).